A 910-amino-acid chain; its full sequence is Putative disease resistance protein At1g58400 (910 aa).

A coiled-coil region spans residues 15-57 (DRLTQEYEQFQGVEDRIAELKSNLNLLKSFLKDAEAKKNTSQM). The NB-ARC domain maps to 148–460 (REREMRQTFS…AEGILEPRHY (313 aa)). 191–198 (GMGGLGKT) contributes to the ATP binding site. LRR repeat units follow at residues 580 to 604 (LELL…GIGK) and 605 to 628 (LIHL…LGNL).

Belongs to the disease resistance NB-LRR family.

Its function is as follows. Potential disease resistance protein. This is Putative disease resistance protein At1g58400 from Arabidopsis thaliana (Mouse-ear cress).